The following is a 509-amino-acid chain: ATP synthase subunit alpha (509 aa).

169–176 (GDRQTGKT) is an ATP binding site.

This sequence belongs to the ATPase alpha/beta chains family. F-type ATPases have 2 components, CF(1) - the catalytic core - and CF(0) - the membrane proton channel. CF(1) has five subunits: alpha(3), beta(3), gamma(1), delta(1), epsilon(1). CF(0) has three main subunits: a(1), b(2) and c(9-12). The alpha and beta chains form an alternating ring which encloses part of the gamma chain. CF(1) is attached to CF(0) by a central stalk formed by the gamma and epsilon chains, while a peripheral stalk is formed by the delta and b chains.

It localises to the cell inner membrane. The enzyme catalyses ATP + H2O + 4 H(+)(in) = ADP + phosphate + 5 H(+)(out). Functionally, produces ATP from ADP in the presence of a proton gradient across the membrane. The alpha chain is a regulatory subunit. The polypeptide is ATP synthase subunit alpha (Rhizobium etli (strain CIAT 652)).